A 979-amino-acid chain; its full sequence is Putative transcription initiation factor TFIID 111 kDa subunit (979 aa).

Residue Ser244 is modified to Phosphoserine.

As to quaternary structure, TFIID is composed of TATA binding protein (TBP) and a number of TBP-associated factors (TAFs).

Its subcellular location is the nucleus. Its function is as follows. TAFs are components of the transcription factor IID (TFIID) complex that are essential for mediating regulation of RNA polymerase transcription. The chain is Putative transcription initiation factor TFIID 111 kDa subunit from Schizosaccharomyces pombe (strain 972 / ATCC 24843) (Fission yeast).